A 103-amino-acid polypeptide reads, in one-letter code: Pyrimidine/purine nucleoside phosphorylase (103 aa).

The protein belongs to the nucleoside phosphorylase PpnP family.

The enzyme catalyses a purine D-ribonucleoside + phosphate = a purine nucleobase + alpha-D-ribose 1-phosphate. It carries out the reaction adenosine + phosphate = alpha-D-ribose 1-phosphate + adenine. The catalysed reaction is cytidine + phosphate = cytosine + alpha-D-ribose 1-phosphate. It catalyses the reaction guanosine + phosphate = alpha-D-ribose 1-phosphate + guanine. The enzyme catalyses inosine + phosphate = alpha-D-ribose 1-phosphate + hypoxanthine. It carries out the reaction thymidine + phosphate = 2-deoxy-alpha-D-ribose 1-phosphate + thymine. The catalysed reaction is uridine + phosphate = alpha-D-ribose 1-phosphate + uracil. It catalyses the reaction xanthosine + phosphate = alpha-D-ribose 1-phosphate + xanthine. In terms of biological role, catalyzes the phosphorolysis of diverse nucleosides, yielding D-ribose 1-phosphate and the respective free bases. Can use uridine, adenosine, guanosine, cytidine, thymidine, inosine and xanthosine as substrates. Also catalyzes the reverse reactions. This Laribacter hongkongensis (strain HLHK9) protein is Pyrimidine/purine nucleoside phosphorylase.